Consider the following 436-residue polypeptide: Ribosomal protein uS12 methylthiotransferase RimO (436 aa).

The MTTase N-terminal domain maps to 2-117 (KNVGIISLGC…IAEVIEKIEK (116 aa)). 6 residues coordinate [4Fe-4S] cluster: Cys-11, Cys-47, Cys-80, Cys-154, Cys-158, and Cys-161. The 230-residue stretch at 140 to 369 (TTPNYYAYLK…MEIQKEISYQ (230 aa)) folds into the Radical SAM core domain. The TRAM domain occupies 372-436 (LSKVGKQLEV…AYEYDLVGEY (65 aa)).

It belongs to the methylthiotransferase family. RimO subfamily. [4Fe-4S] cluster is required as a cofactor.

The protein localises to the cytoplasm. It catalyses the reaction L-aspartate(89)-[ribosomal protein uS12]-hydrogen + (sulfur carrier)-SH + AH2 + 2 S-adenosyl-L-methionine = 3-methylsulfanyl-L-aspartate(89)-[ribosomal protein uS12]-hydrogen + (sulfur carrier)-H + 5'-deoxyadenosine + L-methionine + A + S-adenosyl-L-homocysteine + 2 H(+). Its function is as follows. Catalyzes the methylthiolation of an aspartic acid residue of ribosomal protein uS12. The sequence is that of Ribosomal protein uS12 methylthiotransferase RimO from Thermoanaerobacter sp. (strain X514).